The primary structure comprises 352 residues: Probable tyrosine-protein kinase DDB_G0290471 (352 aa).

Residues 51–333 form the Protein kinase domain; the sequence is IEYVCRLGSG…ISLNQIRSFY (283 aa). Residues 57–65 and Lys78 each bind ATP; that span reads LGSGSLCRV. Asp175 (proton acceptor) is an active-site residue.

This sequence belongs to the protein kinase superfamily. TKL Tyr protein kinase family.

The enzyme catalyses L-tyrosyl-[protein] + ATP = O-phospho-L-tyrosyl-[protein] + ADP + H(+). This Dictyostelium discoideum (Social amoeba) protein is Probable tyrosine-protein kinase DDB_G0290471.